We begin with the raw amino-acid sequence, 237 residues long: UPF0173 metal-dependent hydrolase BCAN_B0597 (237 aa).

Belongs to the UPF0173 family.

The chain is UPF0173 metal-dependent hydrolase BCAN_B0597 from Brucella canis (strain ATCC 23365 / NCTC 10854 / RM-666).